Here is a 399-residue protein sequence, read N- to C-terminus: Formate-dependent phosphoribosylglycinamide formyltransferase (399 aa).

N(1)-(5-phospho-beta-D-ribosyl)glycinamide is bound by residues 8–9 (EL) and E68. Residues R100, K141, 146–151 (SSGHGQ), 185–188 (EALA), and E193 contribute to the ATP site. The 204-residue stretch at 105-308 (VLAHEELGLP…EFALHARAIL (204 aa)) folds into the ATP-grasp domain. 2 residues coordinate Mg(2+): E266 and E279. Residues D286, K361, and 368–369 (RR) contribute to the N(1)-(5-phospho-beta-D-ribosyl)glycinamide site.

The protein belongs to the PurK/PurT family. Homodimer.

It catalyses the reaction N(1)-(5-phospho-beta-D-ribosyl)glycinamide + formate + ATP = N(2)-formyl-N(1)-(5-phospho-beta-D-ribosyl)glycinamide + ADP + phosphate + H(+). Its pathway is purine metabolism; IMP biosynthesis via de novo pathway; N(2)-formyl-N(1)-(5-phospho-D-ribosyl)glycinamide from N(1)-(5-phospho-D-ribosyl)glycinamide (formate route): step 1/1. Functionally, involved in the de novo purine biosynthesis. Catalyzes the transfer of formate to 5-phospho-ribosyl-glycinamide (GAR), producing 5-phospho-ribosyl-N-formylglycinamide (FGAR). Formate is provided by PurU via hydrolysis of 10-formyl-tetrahydrofolate. This chain is Formate-dependent phosphoribosylglycinamide formyltransferase, found in Bifidobacterium adolescentis (strain ATCC 15703 / DSM 20083 / NCTC 11814 / E194a).